We begin with the raw amino-acid sequence, 398 residues long: ATP-dependent RNA helicase eIF4A (398 aa).

The Q motif motif lies at 25–53 (DSFDSMDLKPELLRGIYAYGFERPSAIQQ). The region spanning 56–226 (IMPIIKGSDV…TKFMRDPVRI (171 aa)) is the Helicase ATP-binding domain. 69–76 (AQSGTGKT) serves as a coordination point for ATP. Positions 174 to 177 (DEAD) match the DEAD box motif. A Helicase C-terminal domain is found at 237–398 (GIKQFYIAVE…EMPMNVADLI (162 aa)).

The protein belongs to the DEAD box helicase family. eIF4A subfamily. Component of the eIF4F complex, which composition varies with external and internal environmental conditions. It is composed of at least eIF4A, eIF4E and eIF4G.

It localises to the cytoplasm. It carries out the reaction ATP + H2O = ADP + phosphate + H(+). ATP-dependent RNA helicase which is a subunit of the eIF4F complex involved in cap recognition and is required for mRNA binding to ribosome. In the current model of translation initiation, eIF4A unwinds RNA secondary structures in the 5'-UTR of mRNAs which is necessary to allow efficient binding of the small ribosomal subunit, and subsequent scanning for the initiator codon. The protein is ATP-dependent RNA helicase eIF4A (tif1) of Aspergillus clavatus (strain ATCC 1007 / CBS 513.65 / DSM 816 / NCTC 3887 / NRRL 1 / QM 1276 / 107).